Reading from the N-terminus, the 353-residue chain is UPF0283 membrane protein YcjF (353 aa).

Helical transmembrane passes span 70 to 90 (MVMG…IQWT), 100 to 120 (VALG…GSVV), and 213 to 233 (ESTL…FIAW).

The protein belongs to the UPF0283 family.

It is found in the cell inner membrane. The protein is UPF0283 membrane protein YcjF of Shigella flexneri serotype 5b (strain 8401).